The chain runs to 89 residues: Arminin 7591 (89 aa).

An N-terminal signal peptide occupies residues 1–18 (MRSAFAVLFLALIAITYS). The propeptide occupies 19–58 (KNYEDVKEEIKNEVENEILKDLEEDVNEFDDNVQEEVNDA). The residue at position 86 (Leu-86) is a Leucine amide.

This sequence belongs to the arminin family. As to expression, expressed in entodermal epithelium along the body column.

It is found in the secreted. Its subcellular location is the target cell membrane. Antimicrobial peptide with a broad-spectrum antimicrobial activity. Keeps its antibacterial activity under a wide range of salt concentrations that mimic physiological conditions of human blood, which is surprising, since Hydra is an obligate freshwater animal with nearly no salt tolerance. Does not affect red blood cells. This chain is Arminin 7591, found in Hydra vulgaris (Hydra).